The chain runs to 117 residues: Large ribosomal subunit protein bL20 (117 aa).

It belongs to the bacterial ribosomal protein bL20 family.

Binds directly to 23S ribosomal RNA and is necessary for the in vitro assembly process of the 50S ribosomal subunit. It is not involved in the protein synthesizing functions of that subunit. This is Large ribosomal subunit protein bL20 from Mesomycoplasma hyopneumoniae (strain 232) (Mycoplasma hyopneumoniae).